The sequence spans 142 residues: ATP synthase epsilon chain (142 aa).

The protein belongs to the ATPase epsilon chain family. F-type ATPases have 2 components, CF(1) - the catalytic core - and CF(0) - the membrane proton channel. CF(1) has five subunits: alpha(3), beta(3), gamma(1), delta(1), epsilon(1). CF(0) has three main subunits: a, b and c.

Its subcellular location is the cell inner membrane. Its function is as follows. Produces ATP from ADP in the presence of a proton gradient across the membrane. The sequence is that of ATP synthase epsilon chain from Maridesulfovibrio salexigens (strain ATCC 14822 / DSM 2638 / NCIMB 8403 / VKM B-1763) (Desulfovibrio salexigens).